The following is a 752-amino-acid chain: THO complex subunit HPR1 (752 aa).

Ser234 carries the phosphoserine modification. The tract at residues 648–752 is disordered; the sequence is RKKRALEEEA…SNGSSTQDMK (105 aa). Positions 692–702 are enriched in basic and acidic residues; the sequence is EISEENTKIKS. Polar residues predominate over residues 720-752; sequence PQNTTAQLENPKTEDNNAATSNISNGSSTQDMK.

In terms of assembly, component of the THO complex, which is composed of HPR1, MFT1, THO2 and THP2. Together with SUB2, TEX1 and YRA1, THO forms the transcription/export (TREX) complex. THO associates with DNA and RNA in vitro.

It localises to the nucleus. Component the THO subcomplex of the TREX complex, which operates in coupling transcription elongation to mRNA export. The THO complex is recruited to transcribed genes and moves along the gene with the elongating polymerase during transcription. THO is important for stabilizing nascent RNA in the RNA polymerase II elongation complex by preventing formation of DNA:RNA hybrids behind the elongating polymerase. It functions in cotranscriptional formation of an export-competent messenger ribonucleoprotein particle (mRNP) by facilitating the loading of ATP-dependent RNA helicase SUB2 and the mRNA export factor YRA1 along the nascent mRNA. This is THO complex subunit HPR1 (HPR1) from Saccharomyces cerevisiae (strain ATCC 204508 / S288c) (Baker's yeast).